A 667-amino-acid polypeptide reads, in one-letter code: Long-chain-fatty-acid--CoA ligase ACSBG2 (667 aa).

ATP is bound by residues T227–K235, E418–S423, D496, R511, and R624.

It belongs to the ATP-dependent AMP-binding enzyme family. Bubblegum subfamily. As to expression, testis- and brainstem-specific. Expressed in pubertal and adult testis. Enriched in germ cells and Sertoli cells while present at a lower level in Leydig cells. Present in testicular Sertoli cells and large motoneurons in the medulla oblongata and cervical spinal cord (at protein level).

It localises to the cytoplasm. It is found in the membrane. The enzyme catalyses a long-chain fatty acid + ATP + CoA = a long-chain fatty acyl-CoA + AMP + diphosphate. It catalyses the reaction (5Z,8Z,11Z,14Z)-eicosatetraenoate + ATP + CoA = (5Z,8Z,11Z,14Z)-eicosatetraenoyl-CoA + AMP + diphosphate. The catalysed reaction is hexadecanoate + ATP + CoA = hexadecanoyl-CoA + AMP + diphosphate. It carries out the reaction (9Z)-octadecenoate + ATP + CoA = (9Z)-octadecenoyl-CoA + AMP + diphosphate. The enzyme catalyses (9Z,12Z)-octadecadienoate + ATP + CoA = (9Z,12Z)-octadecadienoyl-CoA + AMP + diphosphate. It catalyses the reaction tetracosanoate + ATP + CoA = tetracosanoyl-CoA + AMP + diphosphate. In terms of biological role, catalyzes the conversion of fatty acids such as long chain and very long-chain fatty acids to their active form acyl-CoAs for both synthesis of cellular lipids, and degradation via beta-oxidation. Can activate diverse saturated, monosaturated and polyunsaturated fatty acids. Has increased ability to activate oleic and linoleic acid. May play a role in spermatogenesis. The chain is Long-chain-fatty-acid--CoA ligase ACSBG2 from Mus musculus (Mouse).